The primary structure comprises 147 residues: Fibromodulin (147 aa).

6 LRR repeats span residues 1-15 (LDHN…PLPR), 16-37 (SLRE…ALEG), 40-61 (NLTA…MRGL), 63-84 (SLIL…LPSA), 85-105 (LEQL…YFRG), and 108-128 (KLLY…ASNT). N-linked (GlcNAc...) asparagine glycosylation is present at N5. An N-linked (GlcNAc...) asparagine glycan is attached at N40. An N-linked (GlcNAc...) asparagine glycan is attached at N130. One copy of the LRR 7 repeat lies at 133-147 (SLLELDLSYNQLQKI).

The protein belongs to the small leucine-rich proteoglycan (SLRP) family. SLRP class II subfamily. Binds to type I and type II collagen. Post-translationally, binds keratan sulfate chains. Sulfated on tyrosine residues. In terms of processing, the N-terminus is blocked by a pyrrolidone carboxylic acid generated by post-translational modification of N-terminal glutamine.

The protein localises to the secreted. Its subcellular location is the extracellular space. It localises to the extracellular matrix. Functionally, affects the rate of fibrils formation. May have a primary role in collagen fibrillogenesis. The polypeptide is Fibromodulin (FMOD) (Oryctolagus cuniculus (Rabbit)).